Consider the following 345-residue polypeptide: N-acetyl-gamma-glutamyl-phosphate reductase (345 aa).

C149 is an active-site residue.

It belongs to the NAGSA dehydrogenase family. Type 1 subfamily.

The protein localises to the cytoplasm. It catalyses the reaction N-acetyl-L-glutamate 5-semialdehyde + phosphate + NADP(+) = N-acetyl-L-glutamyl 5-phosphate + NADPH + H(+). It functions in the pathway amino-acid biosynthesis; L-arginine biosynthesis; N(2)-acetyl-L-ornithine from L-glutamate: step 3/4. In terms of biological role, catalyzes the NADPH-dependent reduction of N-acetyl-5-glutamyl phosphate to yield N-acetyl-L-glutamate 5-semialdehyde. The sequence is that of N-acetyl-gamma-glutamyl-phosphate reductase from Bacillus thuringiensis subsp. konkukian (strain 97-27).